The primary structure comprises 1249 residues: DNA-directed RNA polymerase subunit beta (1249 aa).

It belongs to the RNA polymerase beta chain family. The RNAP catalytic core consists of 2 alpha, 1 beta, 1 beta' and 1 omega subunit. When a sigma factor is associated with the core the holoenzyme is formed, which can initiate transcription.

It catalyses the reaction RNA(n) + a ribonucleoside 5'-triphosphate = RNA(n+1) + diphosphate. DNA-dependent RNA polymerase catalyzes the transcription of DNA into RNA using the four ribonucleoside triphosphates as substrates. In Clostridium botulinum (strain Eklund 17B / Type B), this protein is DNA-directed RNA polymerase subunit beta.